The sequence spans 1302 residues: Serine-enriched protein (1302 aa).

One can recognise a BTB domain in the interval 40-158 (CDVTFLVGDT…IHTGCVTLQP (119 aa)). Disordered regions lie at residues 325–532 (SIDP…RSPT), 575–624 (PIPP…SVMR), 648–685 (FTRAESGSSGGPLIRQSTFSASPAASSTAAKSAVQKQM), 701–752 (YAKM…SSDE), 834–858 (FTRRSESREPIEPRISEERESDSND), 1045–1090 (FQRS…RTEN), 1102–1163 (FSRA…GEEE), and 1187–1252 (VLTQ…SASP). Residues 337-364 (RQHHRHRHHHQSLPKIRKAKSQSFRTRR) are compositionally biased toward basic residues. 4 stretches are compositionally biased toward polar residues: residues 378 to 388 (LTLNTSLTSGN), 410 to 430 (SPGSSSQKTPTSLSRQGTLRA), 437 to 449 (SGQLSISLGTQGR), and 472 to 487 (GLRSPNDPMTSPTVRS). A compositionally biased stretch (basic and acidic residues) spans 589–623 (KSAEREREAAEAAAREKEKEKEKEAAQPQEKKSVM). The span at 664-680 (STFSASPAASSTAAKSA) shows a compositional bias: low complexity. Over residues 713 to 723 (KRDDEEKEKQK) the composition is skewed to basic and acidic residues. Polar residues predominate over residues 736–748 (DLSQTNADQQVGG). The span at 836–855 (RRSESREPIEPRISEERESD) shows a compositional bias: basic and acidic residues. 2 stretches are compositionally biased toward low complexity: residues 1047–1056 (RSGSSCGGRK) and 1107–1128 (SPLSQQTSSNYSSRDSYDSSGS). Over residues 1187-1207 (VLTQQLSTGSMSTPSGYTNGT) the composition is skewed to polar residues. Low complexity predominate over residues 1226 to 1252 (APLSSCGFSSGSEFEPPSPRRAASASP).

This is Serine-enriched protein (gprs) from Drosophila melanogaster (Fruit fly).